Here is a 474-residue protein sequence, read N- to C-terminus: Citrate synthase, mitochondrial (474 aa).

A mitochondrion-targeting transit peptide spans 1–35; it reads MASTLRLSTSALRSSTLAGKPVVQSVAFNGLRCYS. Catalysis depends on residues His310, His356, and Asp411.

The protein belongs to the citrate synthase family.

It is found in the mitochondrion matrix. It carries out the reaction oxaloacetate + acetyl-CoA + H2O = citrate + CoA + H(+). Its pathway is carbohydrate metabolism; tricarboxylic acid cycle; isocitrate from oxaloacetate: step 1/2. This chain is Citrate synthase, mitochondrial (citA), found in Emericella nidulans (strain FGSC A4 / ATCC 38163 / CBS 112.46 / NRRL 194 / M139) (Aspergillus nidulans).